Reading from the N-terminus, the 341-residue chain is UDP-glucose 4-epimerase (341 aa).

The protein belongs to the polysaccharide synthase family.

The catalysed reaction is UDP-alpha-D-glucose = UDP-alpha-D-galactose. Its function is as follows. Epimerizes UDP-galactose to UDP-glucose. This Rickettsia canadensis (strain McKiel) protein is UDP-glucose 4-epimerase (capD).